A 353-amino-acid chain; its full sequence is Inactive ubiquitin thioesterase OTULINL (353 aa).

Residues 1–80 (MEAPRSAPRE…KWWIGYLQRK (80 aa)) are required for membrane binding. Residues 125–353 (KCVRAVKRDN…NGHHYHIPVF (229 aa)) form the OTU domain.

This sequence belongs to the peptidase C65 family. Otulin subfamily. Does not bind ubiquitin or ubiquitin-like proteins.

Its subcellular location is the cytoplasm. It is found in the endoplasmic reticulum membrane. It localises to the nucleus envelope. Its function is as follows. Lacks deubiquitinase activity. The polypeptide is Inactive ubiquitin thioesterase OTULINL (Mus musculus (Mouse)).